Reading from the N-terminus, the 191-residue chain is Clusterin (191 aa).

N-linked (GlcNAc...) asparagine glycosylation is found at asparagine 79, asparagine 116, asparagine 142, and asparagine 162. Residue serine 184 is modified to Phosphoserine.

It belongs to the clusterin family. As to quaternary structure, antiparallel disulfide-linked heterodimer of an alpha chain and a beta chain. Self-associates and forms higher oligomers. Interacts with a broad range of misfolded proteins, including APP, APOC2 and LYZ. Slightly acidic pH promotes interaction with misfolded proteins. Forms high-molecular weight oligomers upon interaction with misfolded proteins. Interacts with APOA1, LRP2, CLUAP1 and PON1. Interacts with the complement membrane attack complex. Interacts (via alpha chain) with XRCC6. Interacts with SYVN1, COMMD1, BTRC, CUL1 and with ubiquitin and SCF (SKP1-CUL1-F-box protein) E3 ubiquitin-protein ligase complexes. Interacts (via alpha chain) with BAX in stressed cells, where BAX undergoes a conformation change leading to association with the mitochondrial membrane. Does not interact with BAX in unstressed cells. Found in a complex with LTF, CLU, EPPIN and SEMG1. Interacts (immaturely glycosylated pre-secreted form) with HSPA5; this interaction promotes CLU stability and facilitates stress-induced CLU retrotranslocation from the secretory pathway to the mitochondria, thereby reducing stress-induced apoptosis by stabilizing mitochondrial membrane integrity. Interacts with BCL2L1; this interaction releases and activates BAX and promotes cell death. Interacts with TGFBR2 and ACVR1. Interacts (secreted form) with STMN3; this interaction may act as an important modulator during neuronal differentiation. Proteolytically cleaved on its way through the secretory system, probably within the Golgi lumen. Proteolytic cleavage is not necessary for its chaperone activity. All non-secreted forms are not proteolytically cleaved. Chaperone activity of uncleaved forms is dependent on a non-reducing environment. Post-translationally, polyubiquitinated, leading to proteasomal degradation. Under cellular stress, the intracellular level of cleaved form is reduced due to proteasomal degradation. In terms of processing, heavily N-glycosylated. About 30% of the protein mass is comprised of complex N-linked carbohydrate. Endoplasmic reticulum (ER) stress induces changes in glycosylation status and increases level of hypoglycosylated forms. Core carbohydrates are essential for chaperone activity. Non-secreted forms are hypoglycosylated or unglycosylated.

Its subcellular location is the secreted. It localises to the nucleus. The protein resides in the cytoplasm. The protein localises to the mitochondrion membrane. It is found in the cytosol. Its subcellular location is the microsome. It localises to the endoplasmic reticulum. The protein resides in the mitochondrion. The protein localises to the perinuclear region. It is found in the cytoplasmic vesicle. Its subcellular location is the secretory vesicle. It localises to the chromaffin granule. Functionally, functions as extracellular chaperone that prevents aggregation of non native proteins. Prevents stress-induced aggregation of blood plasma proteins. Inhibits formation of amyloid fibrils by APP, APOC2, B2M, CALCA, CSN3, SNCA and aggregation-prone LYZ variants (in vitro). Does not require ATP. Maintains partially unfolded proteins in a state appropriate for subsequent refolding by other chaperones, such as HSPA8/HSC70. Does not refold proteins by itself. Binding to cell surface receptors triggers internalization of the chaperone-client complex and subsequent lysosomal or proteasomal degradation. When secreted, protects cells against apoptosis and against cytolysis by complement: inhibits assembly of the complement membrane attack complex (MAC) by preventing polymerization of C9 pore component of the MAC complex. Intracellular forms interact with ubiquitin and SCF (SKP1-CUL1-F-box protein) E3 ubiquitin-protein ligase complexes and promote the ubiquitination and subsequent proteasomal degradation of target proteins. Promotes proteasomal degradation of COMMD1 and IKBKB. Modulates NF-kappa-B transcriptional activity. Following stress, promotes apoptosis. Inhibits apoptosis when associated with the mitochondrial membrane by interference with BAX-dependent release of cytochrome c into the cytoplasm. Plays a role in the regulation of cell proliferation. An intracellular form suppresses stress-induced apoptosis by stabilizing mitochondrial membrane integrity through interaction with HSPA5. Secreted form does not affect caspase or BAX-mediated intrinsic apoptosis and TNF-induced NF-kappa-B-activity. Secreted form act as an important modulator during neuronal differentiation through interaction with STMN3. Plays a role in the clearance of immune complexes that arise during cell injury. This is Clusterin from Mesocricetus auratus (Golden hamster).